Reading from the N-terminus, the 272-residue chain is Putative phosphoenolpyruvate synthase regulatory protein (272 aa).

Residue 152–159 participates in ADP binding; sequence GVSRCGKT.

The protein belongs to the pyruvate, phosphate/water dikinase regulatory protein family. PSRP subfamily.

The catalysed reaction is [pyruvate, water dikinase] + ADP = [pyruvate, water dikinase]-phosphate + AMP + H(+). It carries out the reaction [pyruvate, water dikinase]-phosphate + phosphate + H(+) = [pyruvate, water dikinase] + diphosphate. Its function is as follows. Bifunctional serine/threonine kinase and phosphorylase involved in the regulation of the phosphoenolpyruvate synthase (PEPS) by catalyzing its phosphorylation/dephosphorylation. The chain is Putative phosphoenolpyruvate synthase regulatory protein from Stutzerimonas stutzeri (strain A1501) (Pseudomonas stutzeri).